The chain runs to 153 residues: Superoxide dismutase [Cu-Zn] (153 aa).

The N-linked (GlcNAc...) asparagine glycan is linked to N24. Cu cation contacts are provided by H47, H49, and H64. C58 and C147 are oxidised to a cystine. Zn(2+) contacts are provided by H64, H72, H81, and D84. H121 serves as a coordination point for Cu cation. Over residues 126–137 the composition is skewed to basic and acidic residues; the sequence is DLGRGGNEESKK. The interval 126–145 is disordered; the sequence is DLGRGGNEESKKTGNAGPRP. R144 contributes to the substrate binding site.

Belongs to the Cu-Zn superoxide dismutase family. Homodimer. Cu cation serves as cofactor. Requires Zn(2+) as cofactor.

It is found in the cytoplasm. The enzyme catalyses 2 superoxide + 2 H(+) = H2O2 + O2. Destroys radicals which are normally produced within the cells and which are toxic to biological systems. This is Superoxide dismutase [Cu-Zn] from Humicola lutea.